A 418-amino-acid polypeptide reads, in one-letter code: UDP-N-acetylglucosamine 1-carboxyvinyltransferase (418 aa).

Residue Lys-22–Asn-23 participates in phosphoenolpyruvate binding. Arg-92 is a binding site for UDP-N-acetyl-alpha-D-glucosamine. The active-site Proton donor is Cys-116. Cys-116 carries the post-translational modification 2-(S-cysteinyl)pyruvic acid O-phosphothioketal. Residues Arg-121–Leu-125, Asp-305, and Leu-327 contribute to the UDP-N-acetyl-alpha-D-glucosamine site.

This sequence belongs to the EPSP synthase family. MurA subfamily.

The protein localises to the cytoplasm. The catalysed reaction is phosphoenolpyruvate + UDP-N-acetyl-alpha-D-glucosamine = UDP-N-acetyl-3-O-(1-carboxyvinyl)-alpha-D-glucosamine + phosphate. It participates in cell wall biogenesis; peptidoglycan biosynthesis. Its function is as follows. Cell wall formation. Adds enolpyruvyl to UDP-N-acetylglucosamine. The chain is UDP-N-acetylglucosamine 1-carboxyvinyltransferase from Campylobacter lari (strain RM2100 / D67 / ATCC BAA-1060).